We begin with the raw amino-acid sequence, 657 residues long: Threonine--tRNA ligase (657 aa).

One can recognise a TGS domain in the interval 1–70 (MSDHKESTGA…NSDAAIEIIT (70 aa)). The segment at 253–555 (DHRKLGAELE…LIEHTAGNFP (303 aa)) is catalytic. Zn(2+)-binding residues include C351, H402, and H532.

It belongs to the class-II aminoacyl-tRNA synthetase family. Homodimer. Zn(2+) serves as cofactor.

Its subcellular location is the cytoplasm. The enzyme catalyses tRNA(Thr) + L-threonine + ATP = L-threonyl-tRNA(Thr) + AMP + diphosphate + H(+). Functionally, catalyzes the attachment of threonine to tRNA(Thr) in a two-step reaction: L-threonine is first activated by ATP to form Thr-AMP and then transferred to the acceptor end of tRNA(Thr). Also edits incorrectly charged L-seryl-tRNA(Thr). This is Threonine--tRNA ligase from Chlorobium chlorochromatii (strain CaD3).